The primary structure comprises 379 residues: Succinyl-diaminopimelate desuccinylase (379 aa).

Zn(2+) is bound at residue His70. Asp72 is an active-site residue. Asp103 serves as a coordination point for Zn(2+). The active-site Proton acceptor is Glu137. Residues Glu138, Glu166, and His352 each coordinate Zn(2+).

Belongs to the peptidase M20A family. DapE subfamily. In terms of assembly, homodimer. Zn(2+) serves as cofactor. The cofactor is Co(2+).

The enzyme catalyses N-succinyl-(2S,6S)-2,6-diaminopimelate + H2O = (2S,6S)-2,6-diaminopimelate + succinate. It functions in the pathway amino-acid biosynthesis; L-lysine biosynthesis via DAP pathway; LL-2,6-diaminopimelate from (S)-tetrahydrodipicolinate (succinylase route): step 3/3. Functionally, catalyzes the hydrolysis of N-succinyl-L,L-diaminopimelic acid (SDAP), forming succinate and LL-2,6-diaminopimelate (DAP), an intermediate involved in the bacterial biosynthesis of lysine and meso-diaminopimelic acid, an essential component of bacterial cell walls. This chain is Succinyl-diaminopimelate desuccinylase, found in Burkholderia vietnamiensis (strain G4 / LMG 22486) (Burkholderia cepacia (strain R1808)).